The chain runs to 755 residues: Cartilage oligomeric matrix protein (755 aa).

A signal peptide spans Met-1–Gly-19. A COMP N-terminal region spans residues Gly-21–Arg-84. Residues Pro-85–Thr-124 form the EGF-like 1 domain. 21 disulfides stabilise this stretch: Cys-89/Cys-100, Cys-94/Cys-109, Cys-112/Cys-123, Cys-129/Cys-140, Cys-134/Cys-149, Cys-152/Cys-176, Cys-182/Cys-195, Cys-189/Cys-204, Cys-207/Cys-219, Cys-227/Cys-241, Cys-235/Cys-251, Cys-253/Cys-264, Cys-280/Cys-285, Cys-290/Cys-310, Cys-326/Cys-346, Cys-349/Cys-369, Cys-385/Cys-405, Cys-408/Cys-428, Cys-446/Cys-466, Cys-482/Cys-502, and Cys-518/Cys-739. Residue Asn-119 is glycosylated (N-linked (GlcNAc...) asparagine). In terms of domain architecture, EGF-like 2; calcium-binding spans Asp-125–Thr-177. Residues Asp-178 to Gln-220 enclose the EGF-like 3; calcium-binding domain. An EGF-like 4 domain is found at Gly-223–Gly-265. TSP type-3 repeat units follow at residues Arg-266–Gln-298, Glu-299–Gln-334, Arg-335–Gln-357, Lys-358–Gln-393, Ser-394–Gln-416, Arg-417–Gln-454, Gln-455–Gln-490, and Glu-491–Leu-526. Disordered stretches follow at residues Ser-296 to Lys-341 and Lys-353 to Ala-501. Composition is skewed to basic and acidic residues over residues Pro-332–Lys-341 and Lys-353–Ala-368. Position 394 is a phosphoserine (Ser-394). Composition is skewed to basic and acidic residues over residues Asp-412–Val-424 and Asp-456–Ala-465. Residues Thr-525–Val-755 form a mediates cell survival and induction of the IAP family of survival proteins region. The region spanning Arg-530–Pro-744 is the TSP C-terminal domain. An N-linked (GlcNAc...) asparagine glycan is attached at Asn-740.

The protein belongs to the thrombospondin family. As to quaternary structure, pentamer; disulfide-linked. Exists in a more compact conformation in the presence of calcium and shows a more extended conformation in the absence of calcium. Interacts with ITGB3, ITGA5 and FN1. Binding to FN1 requires the presence of divalent cations (Ca(2+), Mg(2+) or Mn(2+)). The greatest amount of binding is seen in the presence of Mn(2+). Interacts with MATN1, MATN3, MATN4 and ACAN. Binds heparin, heparan sulfate and chondroitin sulfate. EDTA dimishes significantly its binding to ACAN and abolishes its binding to MATN3, MATN4 and chondroitin sulfate. Interacts with collagen I, II and IX, and interaction with these collagens is dependent on the presence of zinc ions. Interacts with ADAMTS12. Interacts with ITGA7. Ca(2+) serves as cofactor. In terms of processing, proteolytically cleaved by metalloproteases ADAMTS4 and ADAMTS1 with ADAMTS4 showing more potent activity. As to expression, expressed in cartilage, including nasal, knee epiphyseal and rib tissues. Abundantly expressed in chondrocyte and tendon extracellular matrix (at protein level).

The protein resides in the secreted. It localises to the extracellular space. The protein localises to the extracellular matrix. Plays a role in the structural integrity of cartilage via its interaction with other extracellular matrix proteins such as the collagens and fibronectin. Can mediate the interaction of chondrocytes with the cartilage extracellular matrix through interaction with cell surface integrin receptors. Could play a role in the pathogenesis of osteoarthritis. Potent suppressor of apoptosis in both primary chondrocytes and transformed cells. Suppresses apoptosis by blocking the activation of caspase-3 and by inducing the IAP family of survival proteins (BIRC3, BIRC2, BIRC5 and XIAP). Essential for maintaining a vascular smooth muscle cells (VSMCs) contractile/differentiated phenotype under physiological and pathological stimuli. Maintains this phenotype of VSMCs by interacting with ITGA7. The protein is Cartilage oligomeric matrix protein of Mus musculus (Mouse).